Here is a 175-residue protein sequence, read N- to C-terminus: NADH-ubiquinone oxidoreductase chain 6 (175 aa).

The next 6 helical transmembrane spans lie at 1-21, 24-44, 51-71, 87-107, 113-133, and 148-168; these read MMYI…GFSS, SPVY…GIIM, LGLV…GYTI, VVLS…VWLF, LVGF…GSFG, and YGFW…FIAI.

This sequence belongs to the complex I subunit 6 family. In terms of assembly, core subunit of respiratory chain NADH dehydrogenase (Complex I) which is composed of 45 different subunits.

The protein resides in the mitochondrion inner membrane. It carries out the reaction a ubiquinone + NADH + 5 H(+)(in) = a ubiquinol + NAD(+) + 4 H(+)(out). Functionally, core subunit of the mitochondrial membrane respiratory chain NADH dehydrogenase (Complex I) which catalyzes electron transfer from NADH through the respiratory chain, using ubiquinone as an electron acceptor. Essential for the catalytic activity and assembly of complex I. This is NADH-ubiquinone oxidoreductase chain 6 (MT-ND6) from Mammuthus primigenius (Siberian woolly mammoth).